Here is a 96-residue protein sequence, read N- to C-terminus: Large ribosomal subunit protein eL43 (96 aa).

The C4-type zinc-finger motif lies at C41–C62.

Belongs to the eukaryotic ribosomal protein eL43 family. Zn(2+) serves as cofactor.

This Methanococcus maripaludis (strain C5 / ATCC BAA-1333) protein is Large ribosomal subunit protein eL43.